The sequence spans 538 residues: Probable inorganic phosphate transporter 1-4 (538 aa).

Residues 1 to 23 lie on the Cytoplasmic side of the membrane; the sequence is MAGELKVLNALDSAKTQWYHFTA. A helical transmembrane segment spans residues 24-44; that stretch reads IVIAGMGFFTDAYDLFSISLV. At 45–69 the chain is on the extracellular side; sequence TKLLGRIYYFNPASKSPGSLPPNVS. The chain crosses the membrane as a helical span at residues 70-90; that stretch reads AAVNGVAFCGTLAGQLFFGWL. The Cytoplasmic segment spans residues 91–98; that stretch reads GDKMGRKK. Residues 99 to 119 form a helical membrane-spanning segment; sequence VYGMTLMLMVICCLASGLSFG. Topologically, residues 120–123 are extracellular; sequence SSAK. A helical transmembrane segment spans residues 124 to 144; it reads GVMATLCFFRFWLGFGIGGDY. Over 145–163 the chain is Cytoplasmic; it reads PLSATIMSEYANKRTRGAF. A helical membrane pass occupies residues 164 to 184; it reads IAAVFAMQGFGNLTGGIVAII. At 185-210 the chain is on the extracellular side; the sequence is VSAAFKARFDAPAYRDDRAGSTVPQA. The helical transmembrane segment at 211–231 threads the bilayer; that stretch reads DYAWRIVLMFGAIPALLTYYW. Residues 232–294 lie on the Cytoplasmic side of the membrane; sequence RMKMPETARY…RQFLRRHGRH (63 aa). Residues 295-315 traverse the membrane as a helical segment; that stretch reads LLGTTVCWFVLDIAFYSSNLF. Residues 316–346 are Extracellular-facing; it reads QKDIYTAVQWLPKADTMSALEEMFKISRAQT. A helical membrane pass occupies residues 347–367; sequence LVALCGTIPGYWFTVFFIDII. At 368 to 369 the chain is on the cytoplasmic side; sequence GR. A helical membrane pass occupies residues 370–390; that stretch reads FVIQLGGFFFMTAFMLGLAVP. Topologically, residues 391 to 396 are extracellular; it reads YHHWTT. A helical transmembrane segment spans residues 397 to 417; it reads PGNHIGFVVMYAFTFFFANFG. Residues 418-440 lie on the Cytoplasmic side of the membrane; that stretch reads PNSTTFIVPAEIFPARLRSTCHG. Residues 441-461 traverse the membrane as a helical segment; the sequence is ISAAAGKAGAIVGSFGFLYAA. At 462-481 the chain is on the extracellular side; the sequence is QSTDASKTDAGYPPGIGVRN. The chain crosses the membrane as a helical span at residues 482–502; it reads SLFFLAGCNVIGFFFTFLVPE. The Cytoplasmic segment spans residues 503-538; the sequence is SKGKSLEELSGENEDDDDVPEAPSTADHRTAPAPPA. The interval 507-538 is disordered; sequence SLEELSGENEDDDDVPEAPSTADHRTAPAPPA. Residues 511-522 show a composition bias toward acidic residues; it reads LSGENEDDDDVP.

Belongs to the major facilitator superfamily. Phosphate:H(+) symporter (TC 2.A.1.9) family.

It is found in the membrane. In terms of biological role, high-affinity transporter for external inorganic phosphate. The chain is Probable inorganic phosphate transporter 1-4 (PHT1-4) from Oryza sativa subsp. indica (Rice).